The chain runs to 687 residues: MTPEVLRQWQELAEQVREHQFRYYVRDAPVITDAEFDELLRRLEALEEQYPELRTPDSPTQLVGGAGFATEFEPVEHLERMLSLDNAFNTEELTAWAGRIHADVGDSAAYLCELKIDGVALSLVYEGGRLTRASTRGDGRTGEDVTLNARTIEDVPERLSHSEDHRMPEVLEVRGEVFFRVADFQALNASLVEEGKAPFANPRNSAAGSLRQKDPAVTARRRLRMICHGLGHTEGFRPATLHQAYLALQAWGLPVSQHTTLVADLAGVQERIDYWGEHRHEVDHEIDGVVVKVDDVALQRRLGSTSRAPRWAIAYKYPPEEAQTKLLDIRVNVGRTGRVTPFAFMTPVKVAGSTVAQATLHNASEVKRKGVLIGDTVVIRKAGDVIPEVLGPVVDLRDGSEREFVMPTTCPECGTPLAPEKEGDADIRCPNTRSCPGQLRERVFHVSSRNALDIEMLGYEAGAALLSARVIGDEGDLFGLTEEELLRTDLFRTKAGDLSANGRRLLANLDKAKAAPLWRVLVALSIRHVGPTAARALATEFGSIDAIVSATTEQLAAVEGVGPTIASAVSEWFTVDWHREIVEKWRAAGVRMADERDDSVPRTLAGVTVVVTGSLPGFSRDEAKEAIVTRGGKAAGSVSKKTSYVVAGDAPGSKYDKAVELGVPILDEDGFRKLLEQGPPAEVGEPT.

Residues 33 to 37 (DAEFD), 83 to 84 (SL), and E113 contribute to the NAD(+) site. K115 (N6-AMP-lysine intermediate) is an active-site residue. R136, E176, K292, and K316 together coordinate NAD(+). Positions 410, 413, 429, and 435 each coordinate Zn(2+). The BRCT domain maps to 599 to 687 (SVPRTLAGVT…GPPAEVGEPT (89 aa)).

This sequence belongs to the NAD-dependent DNA ligase family. LigA subfamily. Requires Mg(2+) as cofactor. The cofactor is Mn(2+).

It catalyses the reaction NAD(+) + (deoxyribonucleotide)n-3'-hydroxyl + 5'-phospho-(deoxyribonucleotide)m = (deoxyribonucleotide)n+m + AMP + beta-nicotinamide D-nucleotide.. Its function is as follows. DNA ligase that catalyzes the formation of phosphodiester linkages between 5'-phosphoryl and 3'-hydroxyl groups in double-stranded DNA using NAD as a coenzyme and as the energy source for the reaction. It is essential for DNA replication and repair of damaged DNA. This chain is DNA ligase, found in Mycobacterium marinum (strain ATCC BAA-535 / M).